The sequence spans 574 residues: K(+)/H(+) antiporter NhaP2 (574 aa).

A run of 13 helical transmembrane segments spans residues 6–26 (INSF…LSPV), 34–54 (ILLI…GGIL), 58–78 (YSTA…DGGM), 87–107 (VALW…TSIT), 109–129 (VMAA…GAIV), 173–193 (IAIL…ISFI), 196–216 (FGLG…LVNL), 219–239 (LAEG…YAAS), 242–262 (LGGS…NKPT), 271–291 (VLDG…GLLL), 299–319 (IWLP…PLAV), 335–355 (WFIS…VFPM), and 359–379 (LPGA…SLLV). Residues 405–486 (SGVEIYPSSE…LEALSNLFSQ (82 aa)) form the RCK C-terminal domain.

Belongs to the monovalent cation:proton antiporter 1 (CPA1) transporter (TC 2.A.36) family. NhaP2 subfamily.

It localises to the cell inner membrane. It carries out the reaction K(+)(in) + H(+)(out) = K(+)(out) + H(+)(in). K(+)/H(+) antiporter that extrudes potassium in exchange for external protons and maintains the internal concentration of potassium under toxic levels. The chain is K(+)/H(+) antiporter NhaP2 from Shewanella sp. (strain MR-7).